We begin with the raw amino-acid sequence, 482 residues long: High affinity 3',5'-cyclic-AMP phosphodiesterase 7A (482 aa).

Ser-84 is modified (phosphoserine). One can recognise a PDEase domain in the interval 136–458 (LDDDYNGQAK…ASWKGLQREQ (323 aa)). His-212 serves as the catalytic Proton donor. The a divalent metal cation site is built by His-216, His-252, Asp-253, and Asp-362.

Belongs to the cyclic nucleotide phosphodiesterase family. PDE7 subfamily. In terms of assembly, interacts with CBFA2T3. The cofactor is a divalent metal cation. As to expression, found at high levels in skeletal muscle and at low levels in a variety of tissues including brain and heart. It is expressed as well in two T-cell lines. Found abundantly in skeletal muscle and at low levels in heart.

It is found in the cytoplasm. The protein localises to the cytosol. It catalyses the reaction 3',5'-cyclic AMP + H2O = AMP + H(+). It participates in purine metabolism; 3',5'-cyclic AMP degradation; AMP from 3',5'-cyclic AMP: step 1/1. Insensitive to all selective PDE inhibitors. Functionally, hydrolyzes the second messenger cAMP, which is a key regulator of many important physiological processes. May have a role in muscle signal transduction. The sequence is that of High affinity 3',5'-cyclic-AMP phosphodiesterase 7A from Homo sapiens (Human).